Reading from the N-terminus, the 579-residue chain is Probable cholinesterase (579 aa).

An N-terminal signal peptide occupies residues 1–19 (MTDHKIIMLLLLGIYCIQA). Residues asparagine 77 and asparagine 144 are each glycosylated (N-linked (GlcNAc...) asparagine; by host). Serine 217 functions as the Acyl-ester intermediate in the catalytic mechanism. N-linked (GlcNAc...) asparagine; by host glycosylation is found at asparagine 257, asparagine 269, and asparagine 283. The active-site Charge relay system is glutamate 337. Residues asparagine 373 and asparagine 394 are each glycosylated (N-linked (GlcNAc...) asparagine; by host). The active-site Charge relay system is the histidine 451. The N-linked (GlcNAc...) asparagine; by host glycan is linked to asparagine 469.

Belongs to the type-B carboxylesterase/lipase family.

The enzyme catalyses an acylcholine + H2O = a carboxylate + choline + H(+). May be involved in the disruption of the host membrane. The protein is Probable cholinesterase of Acanthamoeba polyphaga mimivirus (APMV).